The chain runs to 156 residues: Small ribosomal subunit protein uS7 (156 aa).

This sequence belongs to the universal ribosomal protein uS7 family. Part of the 30S ribosomal subunit. Contacts proteins S9 and S11.

Its function is as follows. One of the primary rRNA binding proteins, it binds directly to 16S rRNA where it nucleates assembly of the head domain of the 30S subunit. Is located at the subunit interface close to the decoding center, probably blocks exit of the E-site tRNA. The sequence is that of Small ribosomal subunit protein uS7 from Bradyrhizobium diazoefficiens (strain JCM 10833 / BCRC 13528 / IAM 13628 / NBRC 14792 / USDA 110).